A 407-amino-acid polypeptide reads, in one-letter code: Formamidase (407 aa).

Homotrimer.

The enzyme catalyses formamide + H2O = formate + NH4(+). Functionally, hydrolyzes formamide with the production of ammonia which can be used as a source of nitrogen for growth. Also acts, more slowly, on acetamide, propanamide and butanamide. The polypeptide is Formamidase (fmdA) (Methylophilus methylotrophus (Bacterium W3A1)).